The primary structure comprises 35 residues: Putative neurotoxin (35 aa).

The 35-residue stretch at 1 to 35 (KEGYPKNSEGCKITCLFNDPYCKGLCINLSTQADY) folds into the LCN-type CS-alpha/beta domain.

As to expression, expressed by the venom gland.

It localises to the secreted. In terms of biological role, causes paralysis and death in insects (A.domestica). In Rhopalurus junceus (Caribbean blue scorpion), this protein is Putative neurotoxin.